The sequence spans 544 residues: Chaperonin GroEL 2 (544 aa).

ATP-binding positions include 29–32 (TLGP), 86–90 (DGTTT), glycine 413, 479–481 (NAA), and aspartate 495.

Belongs to the chaperonin (HSP60) family. In terms of assembly, forms a cylinder of 14 subunits composed of two heptameric rings stacked back-to-back. Interacts with the co-chaperonin GroES.

It is found in the cytoplasm. The catalysed reaction is ATP + H2O + a folded polypeptide = ADP + phosphate + an unfolded polypeptide.. Together with its co-chaperonin GroES, plays an essential role in assisting protein folding. The GroEL-GroES system forms a nano-cage that allows encapsulation of the non-native substrate proteins and provides a physical environment optimized to promote and accelerate protein folding. The chain is Chaperonin GroEL 2 from Prochlorococcus marinus (strain MIT 9515).